A 151-amino-acid chain; its full sequence is Ubiquitin-conjugating enzyme E2 W (151 aa).

Residue Met-1 forms a Peptide (Met-Gly) (interchain with G-Cter in ubiquitin) linkage. The UBC core domain maps to 3–151 (SMQKRLQKEL…TKWWYHDDTC (149 aa)). The Glycyl thioester intermediate role is filled by Cys-91.

The protein belongs to the ubiquitin-conjugating enzyme family. As to quaternary structure, homodimer. Interacts with FANCL. Interacts with STUB1/CHIP. Post-translationally, autoubiquitinated at Met-1.

The protein localises to the nucleus. It catalyses the reaction S-ubiquitinyl-[E1 ubiquitin-activating enzyme]-L-cysteine + [E2 ubiquitin-conjugating enzyme]-L-cysteine = [E1 ubiquitin-activating enzyme]-L-cysteine + S-ubiquitinyl-[E2 ubiquitin-conjugating enzyme]-L-cysteine.. It carries out the reaction S-ubiquitinyl-[E1 ubiquitin-activating enzyme]-L-cysteine + [acceptor protein]-N-terminal-amino acid = [E1 ubiquitin-activating enzyme]-L-cysteine + N-terminal-ubiquitinyl-[acceptor protein].. It participates in protein modification; protein ubiquitination. Its function is as follows. Accepts ubiquitin from the E1 complex and catalyzes its covalent attachment to other proteins. Specifically monoubiquitinates the N-terminus of various substrates, including ATXN3, MAPT/TAU, POLR2H/RPB8 and STUB1/CHIP, by recognizing backbone atoms of disordered N-termini. Involved in degradation of misfolded chaperone substrates by mediating monoubiquitination of STUB1/CHIP, leading to recruitment of ATXN3 to monoubiquitinated STUB1/CHIP, and restriction of the length of ubiquitin chain attached to STUB1/CHIP substrates by ATXN3. After UV irradiation, but not after mitomycin-C (MMC) treatment, acts as a specific E2 ubiquitin-conjugating enzyme for the Fanconi anemia complex by associating with E3 ubiquitin-protein ligase FANCL and catalyzing monoubiquitination of FANCD2, a key step in the DNA damage pathway. In vitro catalyzes 'Lys-11'-linked polyubiquitination. UBE2W-catalyzed ubiquitination also occurs in the presence of inactive RING/U-box type E3s, i.e. lacking the active site cysteine residues to form thioester bonds with ubiquitin, or even in the absence of E3, albeit at a slower rate. The polypeptide is Ubiquitin-conjugating enzyme E2 W (Ube2w) (Mus musculus (Mouse)).